The primary structure comprises 130 residues: Con-Ins M1 (130 aa).

A signal peptide spans 1–21; that stretch reads MTTSSYFLLVALGLLLYVCQS. 4 disulfide bridges follow: Cys29–Cys107, Cys41–Cys110, Cys53–Cys123, and Cys109–Cys114. At Pro34 the chain carries 4-hydroxyproline; partial. A propeptide spans 59-92 (c peptide); the sequence is AHGGTNDARATTGRALSLSKRRGFLSMLKRRGKR. Glu118 carries the 4-carboxyglutamate; partial modification. Ser129 carries the serine amide modification.

This sequence belongs to the insulin family. Heterodimer of A and B chains; disulfide-linked. Expressed by the venom gland.

Its subcellular location is the secreted. Functionally, this venom insulin facilitates prey capture by rapidly inducing hypoglycemic shock. Intraperitoneal injection of this peptide into zebrafish lowers blood glucose with the same potency than human insulin. In vivo, when applied to water, this peptide reduces overall locomotor activity of zebrafish larvae, observed as a significant decrease in the percentage of time spent swimming and movement frequency. This chain is Con-Ins M1, found in Conus marmoreus (Marble cone).